Here is a 134-residue protein sequence, read N- to C-terminus: Small ribosomal subunit protein uS8 (134 aa).

Belongs to the universal ribosomal protein uS8 family. As to quaternary structure, part of the 30S ribosomal subunit. Contacts proteins S5 and S12.

Functionally, one of the primary rRNA binding proteins, it binds directly to 16S rRNA central domain where it helps coordinate assembly of the platform of the 30S subunit. This Pseudothermotoga lettingae (strain ATCC BAA-301 / DSM 14385 / NBRC 107922 / TMO) (Thermotoga lettingae) protein is Small ribosomal subunit protein uS8.